Consider the following 286-residue polypeptide: NADP-dependent dehydrogenase clz5 (286 aa).

7 residues coordinate NADP(+): Ser49, Leu51, Asp93, Tyr207, Lys211, Ile241, and Gln245. Tyr207 acts as the Proton acceptor in catalysis. The active-site Proton donor is the Tyr207. Catalysis depends on Lys211, which acts as the Lowers pKa of active site Tyr.

Belongs to the short-chain dehydrogenases/reductases (SDR) family. Homodimer.

Its subcellular location is the cytoplasm. The protein localises to the cytosol. Its pathway is secondary metabolite biosynthesis. In terms of biological role, NADP-dependent dehydrogenase; part of the gene cluster that mediates the biosynthesis of squalestatin S1 (SQS1, also known as zaragozic acid A), a heavily oxidized fungal polyketide that offers potent cholesterol lowering activity by targeting squalene synthase (SS). SQS1 is composed of a 2,8-dioxobicyclic[3.2.1]octane-3,4,5-tricarboxyclic acid core that is connected to two lipophilic polyketide arms. These initial steps feature the priming of an unusual benzoic acid starter unit onto the highly reducing polyketide synthase clz14, followed by oxaloacetate extension and product release to generate a tricarboxylic acid containing product. The phenylalanine ammonia lyase (PAL) clz10 and the acyl-CoA ligase clz12 are involved in transforming phenylalanine into benzoyl-CoA. The citrate synthase-like protein clz17 is involved in connecting the C-alpha-carbons of the hexaketide chain and oxaloacetate to afford the tricarboxylic acid unit. The potential hydrolytic enzymes, clz11 and clz13, are in close proximity to pks2 and may participate in product release. On the other side, the tetraketide arm is synthesized by a the squalestatin tetraketide synthase clz2 and enzymatically esterified to the core in the last biosynthetic step, by the acetyltransferase clz6. The biosynthesis of the tetraketide must involve 3 rounds of chain extension. After the first and second rounds methyl-transfer occurs, and in all rounds of extension the ketoreductase and dehydratase are active. The enoyl reductase and C-MeT of clz2 are not active in the final round of extension. The acetyltransferase clz6 appears to have a broad substrate selectivity for its acyl CoA substrate, allowing the in vitro synthesis of novel squalestatins. The biosynthesis of SQS1 requires several oxidative steps likely performed by oxidoreductases clz3, clz15 and clz16. Finally, in support of the identification of the cluster as being responsible for SQS1 production, the cluster contains a gene encoding a putative squalene synthase (SS) clz20, suggesting a likely mechanism for self-resistance. The polypeptide is NADP-dependent dehydrogenase clz5 (Cochliobolus lunatus (Filamentous fungus)).